The primary structure comprises 66 residues: DNA gyrase inhibitor YacG (66 aa).

C9, C12, C28, and C32 together coordinate Zn(2+).

Belongs to the DNA gyrase inhibitor YacG family. In terms of assembly, interacts with GyrB. Zn(2+) is required as a cofactor.

Functionally, inhibits all the catalytic activities of DNA gyrase by preventing its interaction with DNA. Acts by binding directly to the C-terminal domain of GyrB, which probably disrupts DNA binding by the gyrase. The protein is DNA gyrase inhibitor YacG of Pseudomonas fluorescens (strain SBW25).